We begin with the raw amino-acid sequence, 202 residues long: Probable nicotinate-nucleotide adenylyltransferase (202 aa).

This sequence belongs to the NadD family.

It catalyses the reaction nicotinate beta-D-ribonucleotide + ATP + H(+) = deamido-NAD(+) + diphosphate. It participates in cofactor biosynthesis; NAD(+) biosynthesis; deamido-NAD(+) from nicotinate D-ribonucleotide: step 1/1. Catalyzes the reversible adenylation of nicotinate mononucleotide (NaMN) to nicotinic acid adenine dinucleotide (NaAD). The polypeptide is Probable nicotinate-nucleotide adenylyltransferase (Clostridium perfringens (strain 13 / Type A)).